A 152-amino-acid chain; its full sequence is Transcriptional regulator MraZ (152 aa).

2 SpoVT-AbrB domains span residues alanine 5–glutamate 52 and alanine 81–threonine 124.

It belongs to the MraZ family. As to quaternary structure, forms oligomers.

The protein localises to the cytoplasm. It is found in the nucleoid. Functionally, negatively regulates its own expression and that of the subsequent genes in the proximal part of the division and cell wall (dcw) gene cluster. Acts by binding directly to DNA. May also regulate the expression of genes outside the dcw cluster. This Salmonella gallinarum (strain 287/91 / NCTC 13346) protein is Transcriptional regulator MraZ.